The primary structure comprises 116 residues: Nucleoid-associated protein MLBr02330 (116 aa).

The segment at 96–116 is disordered; it reads LTSAMRPTAPPPTPPTYMAGT.

This sequence belongs to the YbaB/EbfC family. As to quaternary structure, homodimer.

Its subcellular location is the cytoplasm. The protein localises to the nucleoid. Binds to DNA and alters its conformation. May be involved in regulation of gene expression, nucleoid organization and DNA protection. The polypeptide is Nucleoid-associated protein MLBr02330 (Mycobacterium leprae (strain Br4923)).